Reading from the N-terminus, the 86-residue chain is Beta-toxin To4 (86 aa).

The signal sequence occupies residues 1–20; sequence MTRFVLFISCFFLIGMIVEC. Residues 21–83 form the LCN-type CS-alpha/beta domain; that stretch reads KDGYLMEYGG…IWNRATNKCG (63 aa). Disulfide bonds link C31–C82, C35–C57, C43–C63, and C47–C65. Residue C82 is modified to Cysteine amide.

It belongs to the long (4 C-C) scorpion toxin superfamily. Sodium channel inhibitor family. Beta subfamily. As to expression, expressed by the venom gland.

Its subcellular location is the secreted. Functionally, beta toxins bind voltage-independently at site-4 of sodium channels (Nav) and shift the voltage of activation toward more negative potentials thereby affecting sodium channel activation and promoting spontaneous and repetitive firing. This toxin shows moderate inhibition of Nav1.1/SCN1A, Nav1.2/SCN2A, and Nav1.4/SCN4A, and promotes a left voltage shift on these channels. It exhibits similar potency on Nav1.2/SCN2A and Nav1.4/SCN4A (40-50% peak current inhibition at 0.5 uM), and weaker inhibition on Nav1.2 (20-30% peak current inhibition at 0.5 uM). This Tityus obscurus (Amazonian scorpion) protein is Beta-toxin To4.